The sequence spans 834 residues: MAP kinase phosphatase with leucine-rich repeats protein 1 (834 aa).

Positions 1 to 103 (MIFKKLFSKG…GSGTTKESKK (103 aa)) are disordered. The segment covering 36–78 (GSGTNTNGLSNSTTNPSSIHSTPTTPTTTASTNLTNSNKLSTL) has biased composition (low complexity). The span at 79–98 (APITNGNRSLRGSKDGSGTT) shows a compositional bias: polar residues. 10 LRR repeats span residues 160–181 (ELRS…IGLL), 183–204 (NLKH…LSQL), 206–226 (SLES…NICK), 229–251 (SLTL…INLE), 252–273 (NLKD…LPNN), 274–292 (IEKL…SKSL), 298–319 (SLTT…LSCL), 321–342 (NVKT…VLGS), 345–366 (SLVT…IVTL), and 368–389 (NLRI…PSSE). A disordered region spans residues 503-584 (YEKQENDENN…ENPLKESQGK (82 aa)). Over residues 511 to 536 (NNSVTLETTTTISIASDNTDEASIQI) the composition is skewed to polar residues. Basic and acidic residues-rich tracts occupy residues 538–554 (QKED…DKLL) and 569–582 (KQQE…KESQ). A coiled-coil region spans residues 555–615 (QESFSENNNN…IRLEKIKYQE (61 aa)). A Tyrosine-protein phosphatase domain is found at 695–834 (VPDLIIDKLY…LKKFEKDLSK (140 aa)). Cys778 (phosphocysteine intermediate) is an active-site residue.

Belongs to the protein-tyrosine phosphatase family. Non-receptor class dual specificity subfamily.

It catalyses the reaction O-phospho-L-tyrosyl-[protein] + H2O = L-tyrosyl-[protein] + phosphate. The catalysed reaction is O-phospho-L-seryl-[protein] + H2O = L-seryl-[protein] + phosphate. The enzyme catalyses O-phospho-L-threonyl-[protein] + H2O = L-threonyl-[protein] + phosphate. Its function is as follows. Probable phosphatase with dual specificity toward Ser/Thr and Tyr-containing proteins. Dephosphorylates pNPP, in vitro. Essential for proper regulation of erkB (erk2) and optimal motility during development. This Dictyostelium discoideum (Social amoeba) protein is MAP kinase phosphatase with leucine-rich repeats protein 1 (mpl1).